The following is a 306-amino-acid chain: Abnormal cell migration protein 21 (306 aa).

TSP type-1 domains are found at residues 55-102 and 109-155; these read PGGW…AISS and FGSW…DECP. C-linked (Man) tryptophan glycosylation is found at Trp-58 and Trp-61. Cystine bridges form between Cys-121–Cys-149, Cys-123–Cys-154, and Cys-134–Cys-139. A helical transmembrane segment spans residues 240 to 260; that stretch reads CLPLHFAIPIFCFCILTGFLL.

Glycosylated via C-mannosylation by dpy-19 at Trp-58 and Trp-61.

It localises to the membrane. In terms of biological role, required for determination of left/right asymmetry in nervous system. Acts together with unc-40 to control an initial left-right asymmetric polarization of the Q neuroblasts. Mig-21 and unc-40 may control the asymmetry in Wnt signaling response by restricting posterior polarization to one of the 2 Q neuroblasts. Involved in left-side QL posterior migration. In right-side QR, unc-40 and mig-21 pathways mutually inhibit each other in posterior migration, allowing anterior QR migration. This Caenorhabditis elegans protein is Abnormal cell migration protein 21 (mig-21).